We begin with the raw amino-acid sequence, 513 residues long: 2,3-bisphosphoglycerate-independent phosphoglycerate mutase (513 aa).

Residues Asp13 and Ser63 each contribute to the Mn(2+) site. The Phosphoserine intermediate role is filled by Ser63. Residues His124, 154–155 (RD), Arg186, Arg192, 262–265 (RADR), and Lys335 contribute to the substrate site. 5 residues coordinate Mn(2+): Asp402, His406, Asp443, His444, and His462.

It belongs to the BPG-independent phosphoglycerate mutase family. As to quaternary structure, monomer. Requires Mn(2+) as cofactor.

The catalysed reaction is (2R)-2-phosphoglycerate = (2R)-3-phosphoglycerate. It functions in the pathway carbohydrate degradation; glycolysis; pyruvate from D-glyceraldehyde 3-phosphate: step 3/5. In terms of biological role, catalyzes the interconversion of 2-phosphoglycerate and 3-phosphoglycerate. In Shewanella frigidimarina (strain NCIMB 400), this protein is 2,3-bisphosphoglycerate-independent phosphoglycerate mutase.